A 768-amino-acid polypeptide reads, in one-letter code: MHSDITPIHTHKKYWAECFGTAPFLPTSRKEMDALGWDSCDIVLVTGDAYVDHPSFGMAIIGRLLEAQGFRVGIIAQPQWQDKTDFMSLGKPNLFFGVTSGNMDSMINRYTSDRKLRHDDAYTPNNEGGKRPDRATLVYSQRCREAYKDVPIVLGGIEASLRRVAHYDYWSDKVRRSVLLDAKADILLFGNAERALVEVAHRLAEGEEIAQMTNIRGTAVNLAAEPEGYTIIDSSRIEKPRKEAFIPPNPYEVETQCETKSEEPKAQPITIRPSRHDAATTAVRLPSFEKLQNDRILYAHASRILHLETNPYSGRALIQRHGNRELWVNQAPIPLTTEEMDYVFGLPYARVPHPKYGKAKIPAYDMIKTSVNIMRGCFGGCSFCSITEHEGRIIQNRSQESILTELEEIRDKVPGFTGTISDLGGPTANMYRLGCSDPKAEANCRRPSCVFPGICNKLNTDHKHTIDLYRAARQVKGVKKVMIASGVRYDLAIESPEYVKELVTHHVGGYLKIAPEHTEKGPLDLMMKPGMGTYDRFKEMFDKYSQEAGKKQYLIPYFISAHPGTTDEDMLNLALWLKKNNYECDQVQNFYPSPMCNATSMYYSETNPLKRVKYKQREDVPVAKGDRQRRLHKALLRYHDPANWPLIREALITMGKKYLIGDKPGCLVPAEDVDARTPAQRRKSGRHGANRFATKHTSTQPGFPGDKANAGSGKKPTRGGQSNSAPSRSGSATGGKHPQRSGANTGGKSSGGKNSPRAGGRNQPSRAR.

The region spanning 363–640 (AYDMIKTSVN…LHKALLRYHD (278 aa)) is the Radical SAM core domain. [4Fe-4S] cluster contacts are provided by C377, C381, and C384. The disordered stretch occupies residues 674-768 (DARTPAQRRK…GGRNQPSRAR (95 aa)). Residues 679–689 (AQRRKSGRHGA) are compositionally biased toward basic residues. A compositionally biased stretch (polar residues) spans 719 to 731 (GGQSNSAPSRSGS).

This sequence belongs to the UPF0313 family. The cofactor is [4Fe-4S] cluster.

In Vibrio vulnificus (strain YJ016), this protein is UPF0313 protein VV2143.